We begin with the raw amino-acid sequence, 1373 residues long: DNA-directed RNA polymerase subunit beta (1373 aa).

It belongs to the RNA polymerase beta chain family. In terms of assembly, the RNAP catalytic core consists of 2 alpha, 1 beta, 1 beta' and 1 omega subunit. When a sigma factor is associated with the core the holoenzyme is formed, which can initiate transcription.

It catalyses the reaction RNA(n) + a ribonucleoside 5'-triphosphate = RNA(n+1) + diphosphate. Its function is as follows. DNA-dependent RNA polymerase catalyzes the transcription of DNA into RNA using the four ribonucleoside triphosphates as substrates. The sequence is that of DNA-directed RNA polymerase subunit beta from Rickettsia massiliae.